The sequence spans 389 residues: Xylose isomerase (389 aa).

Catalysis depends on residues His54 and Asp57. Mg(2+) contacts are provided by Glu181, Glu217, His220, Asp245, Asp255, Asp257, and Asp287.

It belongs to the xylose isomerase family. As to quaternary structure, homotetramer. Requires Mg(2+) as cofactor.

Its subcellular location is the cytoplasm. The enzyme catalyses alpha-D-xylose = alpha-D-xylulofuranose. Functionally, involved in D-xylose catabolism. The protein is Xylose isomerase (xylA) of Streptomyces violaceusniger.